The sequence spans 100 residues: Aspartyl/glutamyl-tRNA(Asn/Gln) amidotransferase subunit C (100 aa).

Belongs to the GatC family. In terms of assembly, heterotrimer of A, B and C subunits.

The enzyme catalyses L-glutamyl-tRNA(Gln) + L-glutamine + ATP + H2O = L-glutaminyl-tRNA(Gln) + L-glutamate + ADP + phosphate + H(+). The catalysed reaction is L-aspartyl-tRNA(Asn) + L-glutamine + ATP + H2O = L-asparaginyl-tRNA(Asn) + L-glutamate + ADP + phosphate + 2 H(+). In terms of biological role, allows the formation of correctly charged Asn-tRNA(Asn) or Gln-tRNA(Gln) through the transamidation of misacylated Asp-tRNA(Asn) or Glu-tRNA(Gln) in organisms which lack either or both of asparaginyl-tRNA or glutaminyl-tRNA synthetases. The reaction takes place in the presence of glutamine and ATP through an activated phospho-Asp-tRNA(Asn) or phospho-Glu-tRNA(Gln). The chain is Aspartyl/glutamyl-tRNA(Asn/Gln) amidotransferase subunit C from Streptococcus agalactiae serotype III (strain NEM316).